The primary structure comprises 362 residues: Glutaminase-asparaginase (362 aa).

The N-terminal stretch at 1–25 (MNAALKTFAPSALALLLILPSSASA) is a signal peptide. One can recognise an Asparaginase/glutaminase domain in the interval 35 to 362 (ANVVILATGG…KELQRIFWEY (328 aa)). Catalysis depends on Thr45, which acts as the Acyl-ester intermediate. Substrate-binding positions include Ser92 and 125-126 (TD).

Belongs to the asparaginase 1 family. As to quaternary structure, homotetramer.

Its subcellular location is the periplasm. The enzyme catalyses L-glutamine + H2O = L-glutamate + NH4(+). The catalysed reaction is L-asparagine + H2O = L-aspartate + NH4(+). This is Glutaminase-asparaginase (ansB) from Pseudomonas putida (strain ATCC 47054 / DSM 6125 / CFBP 8728 / NCIMB 11950 / KT2440).